The chain runs to 324 residues: tRNA-cytidine(32) 2-sulfurtransferase (324 aa).

Residues 1–26 form a disordered region; the sequence is MQDLIDSPTAARTPAEEKIRHEGNKL. A compositionally biased stretch (basic and acidic residues) spans 14-26; sequence PAEEKIRHEGNKL. The PP-loop motif motif lies at 55–60; it reads SGGKDS. Positions 130, 133, and 221 each coordinate [4Fe-4S] cluster. Residues 278–310 form a disordered region; that stretch reads RPDANGDTAFDPIDPEDPREDAGDACASSPADG.

The protein belongs to the TtcA family. Homodimer. Mg(2+) is required as a cofactor. Requires [4Fe-4S] cluster as cofactor.

It is found in the cytoplasm. The enzyme catalyses cytidine(32) in tRNA + S-sulfanyl-L-cysteinyl-[cysteine desulfurase] + AH2 + ATP = 2-thiocytidine(32) in tRNA + L-cysteinyl-[cysteine desulfurase] + A + AMP + diphosphate + H(+). It functions in the pathway tRNA modification. In terms of biological role, catalyzes the ATP-dependent 2-thiolation of cytidine in position 32 of tRNA, to form 2-thiocytidine (s(2)C32). The sulfur atoms are provided by the cysteine/cysteine desulfurase (IscS) system. In Bordetella petrii (strain ATCC BAA-461 / DSM 12804 / CCUG 43448), this protein is tRNA-cytidine(32) 2-sulfurtransferase.